Here is a 236-residue protein sequence, read N- to C-terminus: Ribonuclease P protein component 3 (236 aa).

The protein belongs to the eukaryotic/archaeal RNase P protein component 3 family. In terms of assembly, consists of a catalytic RNA component and at least 4-5 protein subunits.

The protein localises to the cytoplasm. The catalysed reaction is Endonucleolytic cleavage of RNA, removing 5'-extranucleotides from tRNA precursor.. Functionally, part of ribonuclease P, a protein complex that generates mature tRNA molecules by cleaving their 5'-ends. The protein is Ribonuclease P protein component 3 of Natronomonas pharaonis (strain ATCC 35678 / DSM 2160 / CIP 103997 / JCM 8858 / NBRC 14720 / NCIMB 2260 / Gabara) (Halobacterium pharaonis).